A 260-amino-acid chain; its full sequence is 3-dehydroquinate dehydratase (260 aa).

Residues 50–52 (EWR) and R86 contribute to the 3-dehydroquinate site. The active-site Proton donor/acceptor is H148. Catalysis depends on K175, which acts as the Schiff-base intermediate with substrate. The 3-dehydroquinate site is built by R217, S236, and Q240.

It belongs to the type-I 3-dehydroquinase family. Homodimer.

It carries out the reaction 3-dehydroquinate = 3-dehydroshikimate + H2O. It functions in the pathway metabolic intermediate biosynthesis; chorismate biosynthesis; chorismate from D-erythrose 4-phosphate and phosphoenolpyruvate: step 3/7. Its function is as follows. Involved in the third step of the chorismate pathway, which leads to the biosynthesis of aromatic amino acids. Catalyzes the cis-dehydration of 3-dehydroquinate (DHQ) and introduces the first double bond of the aromatic ring to yield 3-dehydroshikimate. This is 3-dehydroquinate dehydratase from Aromatoleum aromaticum (strain DSM 19018 / LMG 30748 / EbN1) (Azoarcus sp. (strain EbN1)).